The chain runs to 1441 residues: Envelopment polyprotein (1441 aa).

An N-terminal signal peptide occupies residues 1-13 (MIRMLVLIVVTAA). Residues 14-200 (SPVYQRCFQD…GSIANSICQN (187 aa)) are Lumenal-facing. A glycan (N-linked (GlcNAc...) asparagine; by host) is linked at Asn57. A helical transmembrane segment spans residues 201 to 221 (IEIIILVTLTLLIFILLSILS). Residues 222–305 (KTYICYLLMP…RAARVMCKSK (84 aa)) are Cytoplasmic-facing. Residues 306 to 326 (GPASILSIITAVLVLTFVTPI) traverse the membrane as a helical segment. At 327-365 (NSMVLGESKETFELEELPDDMLEMALRINSYYFTCILNY) the chain is on the lumenal side. A helical membrane pass occupies residues 366–386 (AVSWGLIIAGLLVGLIFKKYQ). At 387 to 452 (HRFLNIYAMY…LVQYKAKWMM (66 aa)) the chain is on the cytoplasmic side. Residues 453-473 (NFLIIYIFLILIKDSAIVGQA) traverse the membrane as a helical segment. Residues 474–1395 (TGTDFTTCLE…EPFKNLFGSY (922 aa)) lie on the Lumenal side of the membrane. Residues Asn490 and Asn1177 are each glycosylated (N-linked (GlcNAc...) asparagine; by host). The helical transmembrane segment at 1396-1416 (IGIFYTFIISIIALLVIIYVL) threads the bilayer. Topologically, residues 1417-1441 (LPICFKLRDTLRKHDDAYKREMKIR) are cytoplasmic.

It belongs to the orthobunyavirus envelope glycoprotein family. As to quaternary structure, glycoprotein C and Glycoprotein N interact with each other. Specific enzymatic cleavages in vivo yield mature proteins including nonstructural protein NSm, glycoprotein C, and glycoprotein N.

It localises to the virion membrane. Its subcellular location is the host Golgi apparatus membrane. The protein localises to the host endoplasmic reticulum membrane. Functionally, glycoprotein C and Glycoprotein N interact with each other and are present at the surface of the virion. They are able to attach the virion to a cell receptor and to promote fusion of membranes after endocytosis of the virion. The protein is Envelopment polyprotein (GP) of Bunyavirus La Crosse.